A 210-amino-acid chain; its full sequence is Orotate phosphoribosyltransferase (210 aa).

Residues arginine 94, lysine 98, histidine 100, and 120 to 128 contribute to the 5-phospho-alpha-D-ribose 1-diphosphate site; that span reads EDLISTGGS. Serine 124 provides a ligand contact to orotate.

Belongs to the purine/pyrimidine phosphoribosyltransferase family. PyrE subfamily. Homodimer. The cofactor is Mg(2+).

It carries out the reaction orotidine 5'-phosphate + diphosphate = orotate + 5-phospho-alpha-D-ribose 1-diphosphate. The protein operates within pyrimidine metabolism; UMP biosynthesis via de novo pathway; UMP from orotate: step 1/2. In terms of biological role, catalyzes the transfer of a ribosyl phosphate group from 5-phosphoribose 1-diphosphate to orotate, leading to the formation of orotidine monophosphate (OMP). This chain is Orotate phosphoribosyltransferase, found in Bacillus cereus (strain B4264).